A 554-amino-acid chain; its full sequence is Serine/threonine-protein phosphatase 2B catalytic subunit (554 aa).

Fe cation contacts are provided by Asp-119, His-121, and Asp-147. Asp-147 and Asn-179 together coordinate Zn(2+). His-180 functions as the Proton donor in the catalytic mechanism. Zn(2+) is bound by residues His-228 and His-310. The interval 411–433 (LKESAPTQHKQPAPSENENKADQ) is disordered. The segment covering 415 to 426 (APTQHKQPAPSE) has biased composition (polar residues).

Belongs to the PPP phosphatase family. PP-2B subfamily. As to quaternary structure, composed of two components (A and B), the A component is the catalytic subunit and the B component confers calcium sensitivity. Fe(3+) is required as a cofactor. Zn(2+) serves as cofactor.

The enzyme catalyses O-phospho-L-seryl-[protein] + H2O = L-seryl-[protein] + phosphate. It catalyses the reaction O-phospho-L-threonyl-[protein] + H2O = L-threonyl-[protein] + phosphate. In terms of biological role, calcium-dependent, calmodulin-stimulated protein phosphatase. This subunit may have a role in the calmodulin activation of calcineurin. Appears to be involved in cytokinesis, mating, transport, nuclear and spindle pole body positioning, and cell shape. This is Serine/threonine-protein phosphatase 2B catalytic subunit (ppb1) from Schizosaccharomyces pombe (strain 972 / ATCC 24843) (Fission yeast).